The chain runs to 327 residues: Phosphate acyltransferase (327 aa).

This sequence belongs to the PlsX family. Homodimer. Probably interacts with PlsY.

It localises to the cytoplasm. The catalysed reaction is a fatty acyl-[ACP] + phosphate = an acyl phosphate + holo-[ACP]. It functions in the pathway lipid metabolism; phospholipid metabolism. Functionally, catalyzes the reversible formation of acyl-phosphate (acyl-PO(4)) from acyl-[acyl-carrier-protein] (acyl-ACP). This enzyme utilizes acyl-ACP as fatty acyl donor, but not acyl-CoA. This is Phosphate acyltransferase from Thermotoga neapolitana (strain ATCC 49049 / DSM 4359 / NBRC 107923 / NS-E).